A 117-amino-acid polypeptide reads, in one-letter code: Movement and RNA silencing protein (117 aa).

Residues Phe-15–Leu-35 form a helical membrane-spanning segment. A disordered region spans residues Arg-83–Phe-117.

It localises to the host cell membrane. Functionally, transports viral genome to neighboring plant cells directly through plasmosdesmata, without any budding. The movement protein allows efficient cell to cell propagation, by bypassing the host cell wall barrier. Begomovirus genome is shuttled out of nucleus by Nuclear shuttle protein (NSP) and the movement protein transports the DNA-NSP complex to cell plasmodesmata and facilitates further movement across the cell wall. Acts as a suppressor of RNA-mediated gene silencing, also known as post-transcriptional gene silencing (PTGS), a mechanism of plant viral defense that limits the accumulation of viral RNAs. In Banana bunchy top virus (isolate Autralia) (BBTV), this protein is Movement and RNA silencing protein (DNA-M).